The chain runs to 319 residues: Probable ABC transporter permease protein MG189 homolog (319 aa).

6 helical membrane-spanning segments follow: residues 41–61 (VVLCFFGLMVIFPFYLMLVVA), 98–118 (AIWINSLVTILSIILRLFFTV), 134–154 (LFWFIFLAVLILPESALLIGQ), 169–189 (PAIILGLTMPFVASVFSGFMF), 229–249 (TVSILTAFAAWNSYLWPLLLL), and 282–302 (NLKMAAAILAILPMFIVYFLF). The ABC transmembrane type-1 domain maps to 99–302 (IWINSLVTIL…LPMFIVYFLF (204 aa)).

It belongs to the binding-protein-dependent transport system permease family. MalFG subfamily.

Its subcellular location is the cell membrane. Probably part of a binding-protein-dependent transport system. Probably responsible for the translocation of the substrate across the membrane. The protein is Probable ABC transporter permease protein MG189 homolog of Mycoplasma pneumoniae (strain ATCC 29342 / M129 / Subtype 1) (Mycoplasmoides pneumoniae).